The following is a 462-amino-acid chain: Citrate synthase, mitochondrial (462 aa).

The transit peptide at 1–21 (MRSINQLLKQASLSQKSQYNF) directs the protein to the mitochondrion. Residues H300, H346, and D401 contribute to the active site.

It belongs to the citrate synthase family. In terms of assembly, homodimer.

It is found in the mitochondrion matrix. The protein localises to the cytoplasm. It localises to the cytoskeleton. The enzyme catalyses oxaloacetate + acetyl-CoA + H2O = citrate + CoA + H(+). Its pathway is carbohydrate metabolism; tricarboxylic acid cycle; isocitrate from oxaloacetate: step 1/2. Its function is as follows. Structural protein involved in oral morphogenesis and in pronuclear behavior during conjugation. Respiratory enzyme. The polypeptide is Citrate synthase, mitochondrial (Tetrahymena thermophila).